A 425-amino-acid polypeptide reads, in one-letter code: Histone-binding protein RBBP4 (425 aa).

The residue at position 2 (alanine 2) is an N-acetylalanine. WD repeat units follow at residues 32–125 (YDLV…NHEG), 126–175 (EVNR…RLRG), 176–223 (HQKE…KTIF), 225–270 (GHTA…HSVD), 271–314 (AHTA…HSFE), 315–371 (SHKD…FIHG), and 372–404 (GHTAKISDFSWNPNEPWVICSVSEDNIMQVWQM).

This sequence belongs to the WD repeat RBAP46/RBAP48/MSI1 family. As to quaternary structure, binds directly to histone H4, probably via helix 1 of the histone fold, a region that is not accessible when histone H4 is in chromatin. Forms a large corepressor complex that contains ncor1, sin3a and possibly sin3b, histone deacetylases hdac2, hdac1, rbbp4 and possibly rbbp7.

The protein localises to the nucleus. The protein resides in the chromosome. It localises to the telomere. In terms of biological role, core histone-binding subunit that may target chromatin assembly factors, chromatin remodeling factors and histone deacetylases to their histone substrates in a manner that is regulated by nucleosomal DNA. Component of several complexes which regulate chromatin metabolism. The polypeptide is Histone-binding protein RBBP4 (rbbp4) (Xenopus tropicalis (Western clawed frog)).